A 412-amino-acid polypeptide reads, in one-letter code: Multifunctional CCA protein (412 aa).

2 residues coordinate ATP: G8 and R11. Positions 8 and 11 each coordinate CTP. The Mg(2+) site is built by D21 and D23. 3 residues coordinate ATP: R91, R137, and R140. CTP-binding residues include R91, R137, and R140. Positions 226–327 constitute an HD domain; sequence TGEHVLMVVE…VKVLERCDAL (102 aa).

Belongs to the tRNA nucleotidyltransferase/poly(A) polymerase family. Bacterial CCA-adding enzyme type 1 subfamily. In terms of assembly, monomer. Can also form homodimers and oligomers. Mg(2+) is required as a cofactor. It depends on Ni(2+) as a cofactor.

It carries out the reaction a tRNA precursor + 2 CTP + ATP = a tRNA with a 3' CCA end + 3 diphosphate. The catalysed reaction is a tRNA with a 3' CCA end + 2 CTP + ATP = a tRNA with a 3' CCACCA end + 3 diphosphate. In terms of biological role, catalyzes the addition and repair of the essential 3'-terminal CCA sequence in tRNAs without using a nucleic acid template. Adds these three nucleotides in the order of C, C, and A to the tRNA nucleotide-73, using CTP and ATP as substrates and producing inorganic pyrophosphate. tRNA 3'-terminal CCA addition is required both for tRNA processing and repair. Also involved in tRNA surveillance by mediating tandem CCA addition to generate a CCACCA at the 3' terminus of unstable tRNAs. While stable tRNAs receive only 3'-terminal CCA, unstable tRNAs are marked with CCACCA and rapidly degraded. The polypeptide is Multifunctional CCA protein (Azoarcus sp. (strain BH72)).